A 459-amino-acid chain; its full sequence is ATP synthase subunit beta (459 aa).

An ATP-binding site is contributed by G149–T156.

This sequence belongs to the ATPase alpha/beta chains family. As to quaternary structure, F-type ATPases have 2 components, CF(1) - the catalytic core - and CF(0) - the membrane proton channel. CF(1) has five subunits: alpha(3), beta(3), gamma(1), delta(1), epsilon(1). CF(0) has three main subunits: a(1), b(2) and c(9-12). The alpha and beta chains form an alternating ring which encloses part of the gamma chain. CF(1) is attached to CF(0) by a central stalk formed by the gamma and epsilon chains, while a peripheral stalk is formed by the delta and b chains.

The protein resides in the cell inner membrane. The enzyme catalyses ATP + H2O + 4 H(+)(in) = ADP + phosphate + 5 H(+)(out). Its function is as follows. Produces ATP from ADP in the presence of a proton gradient across the membrane. The catalytic sites are hosted primarily by the beta subunits. This chain is ATP synthase subunit beta, found in Pseudomonas savastanoi pv. phaseolicola (strain 1448A / Race 6) (Pseudomonas syringae pv. phaseolicola (strain 1448A / Race 6)).